The sequence spans 439 residues: Tol-Pal system protein TolB (439 aa).

The N-terminal stretch at 1–22 (MKKPLRWLAALTALLLPLSAFA) is a signal peptide.

Belongs to the TolB family. In terms of assembly, the Tol-Pal system is composed of five core proteins: the inner membrane proteins TolA, TolQ and TolR, the periplasmic protein TolB and the outer membrane protein Pal. They form a network linking the inner and outer membranes and the peptidoglycan layer.

It localises to the periplasm. Part of the Tol-Pal system, which plays a role in outer membrane invagination during cell division and is important for maintaining outer membrane integrity. In Xanthomonas campestris pv. campestris (strain 8004), this protein is Tol-Pal system protein TolB.